A 168-amino-acid polypeptide reads, in one-letter code: Small ribosomal subunit protein bS16 (168 aa).

Residues Leu-110 to Gly-168 are disordered.

Belongs to the bacterial ribosomal protein bS16 family.

The sequence is that of Small ribosomal subunit protein bS16 from Mycobacterium sp. (strain JLS).